The chain runs to 177 residues: KxDL motif-containing protein 1 (177 aa).

Methionine 1 bears the N-acetylmethionine mark. Positions 100-177 (SHIPEGSFLE…TDDEEETHEE (78 aa)) are disordered. Polar residues predominate over residues 125–145 (ATSEQSTGSCDTSPDTVSPSL).

This sequence belongs to the KXD1 family. As to quaternary structure, component of the BLOC-one-related complex (BORC) which is composed of BLOC1S1, BLOC1S2, BORCS5, BORCS6, BORCS7, BORCS8, KXD1 and SNAPIN. Associates with the BLOC-1 complex. Interacts with BLOC1S1. Interacts with DTNBP1/BLOC1S7 (via coiled-coil domain). In terms of tissue distribution, widely expressed.

It localises to the lysosome membrane. Its function is as follows. As part of the BORC complex may play a role in lysosomes movement and localization at the cell periphery. Associated with the cytosolic face of lysosomes, the BORC complex may recruit ARL8B and couple lysosomes to microtubule plus-end-directed kinesin motor. May also be involved in the biogenesis of lysosome-related organelles such as melanosomes. This chain is KxDL motif-containing protein 1 (Kxd1), found in Mus musculus (Mouse).